A 311-amino-acid polypeptide reads, in one-letter code: MNKYLKYFSGTLVGLMLSTSAFAAAEYAVVLKTLSNPFWVDMKKGIEDEAKTLGVSVDIFASPSEGDFQSQLQLFEDLSNKNYKGIAFAPLSSVNLVMPVARAWKKGIYLVNLDEKIDMDNLKKAGGNVEAFVTTDNVAVGAKGASFIIDKLGAEGGEVAIIEGKAGNASGEARRNGATEAFKKASQIKLVASQPADWDRIKALDVATNVLQRNPNIKAIYCANDTMAMGVAQAVANAGKTGKVLVVGTDGIPEARKMVEAGQMTATVAQNPADIGATGLKLMVDAEKSGKVIPLDKAPEFKLVDSILVTQ.

Positions 1–23 are cleaved as a signal peptide; the sequence is MNKYLKYFSGTLVGLMLSTSAFA.

The protein belongs to the bacterial solute-binding protein 2 family.

It is found in the periplasm. In terms of biological role, part of the binding-protein-dependent transport system AlsBAC for D-allose. The chain is D-allose-binding periplasmic protein (alsB) from Escherichia coli (strain K12).